A 499-amino-acid chain; its full sequence is Dual specificity protein kinase CLK2 (499 aa).

The segment at 1 to 67 is disordered; the sequence is MPHPRRYHSS…SYDDRSSDRR (67 aa). The segment covering 8-21 has biased composition (basic and acidic residues); sequence HSSERGSRGSYREH. Over residues 22–33 the composition is skewed to basic residues; the sequence is YRSRKHKRRRSR. S34 is subject to Phosphoserine; by PKB/AKT1. Over residues 47 to 67 the composition is skewed to basic and acidic residues; the sequence is REDSYHVRSRSSYDDRSSDRR. S98 bears the Phosphoserine mark. Position 99 is a phosphotyrosine; by autocatalysis (Y99). The interval 101–143 is disordered; that stretch reads YQRENSSYRSQRSSRRKHRRRRRRSRTFSRSSSQHSSRRAKSV. A compositionally biased stretch (basic residues) spans 112-127; that stretch reads RSSRRKHRRRRRRSRT. A Phosphothreonine; by PKB/AKT1 modification is found at T127. At S142 the chain carries Phosphoserine; by autocatalysis. At Y153 the chain carries Phosphotyrosine. The Protein kinase domain occupies 163–479; it reads YEIVSTLGEG…LGEALQHPFF (317 aa). Residues 169–177 and K193 contribute to the ATP site; that span reads LGEGTFGRV. Catalysis depends on D290, which acts as the Proton acceptor. Position 344 is a phosphothreonine; by PKB/AKT2 (T344).

The protein belongs to the protein kinase superfamily. CMGC Ser/Thr protein kinase family. Lammer subfamily. In terms of assembly, interacts with RBMX. Interacts with AKT1 and UBL5. Autophosphorylates on all three types of residues. Phosphorylation on Ser-34 and Thr-127 by AKT1 is induced by ionizing radiation or insulin. Phosphorylation plays a critical role in cell proliferation following low dose radiation and prevents cell death following high dose radiation. Phosphorylation at Thr-344 by PKB/AKT2 induces its kinase activity which is required for its stability. The phosphorylation status at Ser-142 influences its subnuclear localization; inhibition of phosphorylation at Ser-142 results in accumulation in the nuclear speckle. Endothelial cells. Expressed in androgen-dependent prostate cancer cells.

The protein localises to the nucleus. It localises to the nucleus speckle. The enzyme catalyses L-seryl-[protein] + ATP = O-phospho-L-seryl-[protein] + ADP + H(+). It carries out the reaction L-threonyl-[protein] + ATP = O-phospho-L-threonyl-[protein] + ADP + H(+). It catalyses the reaction L-tyrosyl-[protein] + ATP = O-phospho-L-tyrosyl-[protein] + ADP + H(+). Its activity is regulated as follows. 5,6-dichloro-1-b-D-ribofuranosylbenzimidazole (DRB) inhibits autophosphorylation. TG003 inhibits its kinase activity and affects the regulation of alternative splicing mediated by phosphorylation of SR proteins. Dual specificity kinase acting on both serine/threonine and tyrosine-containing substrates. Phosphorylates serine- and arginine-rich (SR) proteins of the spliceosomal complex. May be a constituent of a network of regulatory mechanisms that enable SR proteins to control RNA splicing and can cause redistribution of SR proteins from speckles to a diffuse nucleoplasmic distribution. Acts as a suppressor of hepatic gluconeogenesis and glucose output by repressing PPARGC1A transcriptional activity on gluconeogenic genes via its phosphorylation. Phosphorylates PPP2R5B thereby stimulating the assembly of PP2A phosphatase with the PPP2R5B-AKT1 complex leading to dephosphorylation of AKT1. Phosphorylates: PTPN1, SRSF1 and SRSF3. Regulates the alternative splicing of tissue factor (F3) pre-mRNA in endothelial cells. Phosphorylates PAGE4 at several serine and threonine residues and this phosphorylation attenuates the ability of PAGE4 to potentiate the transcriptional activator activity of JUN. The protein is Dual specificity protein kinase CLK2 (CLK2) of Homo sapiens (Human).